The primary structure comprises 667 residues: Tripartite terminase subunit 3 (667 aa).

Positions 208–215 (VPRRHGKT) match the Walker A motif motif. Residues 301–306 (LLIVDE) carry the Walker B motif motif. Glu306 functions as the For ATPase activity in the catalytic mechanism. Active-site for nuclease activity residues include Asp459, Glu530, and Asp644.

Belongs to the herpesviridae TRM3 protein family. In terms of assembly, interacts with the terminase subunits TRM1 and TRM2. Interacts with portal protein.

The protein resides in the host nucleus. Functionally, component of the molecular motor that translocates viral genomic DNA in empty capsid during DNA packaging. Forms a tripartite terminase complex together with TRM1 and TRM2 in the host cytoplasm. Once the complex reaches the host nucleus, it interacts with the capsid portal vertex. This portal forms a ring in which genomic DNA is translocated into the capsid. TRM3 carries an RNase H-like nuclease activity that plays an important role for the cleavage of concatemeric viral DNA into unit length genomes. The chain is Tripartite terminase subunit 3 from Human herpesvirus 6A (strain Uganda-1102) (HHV-6 variant A).